The sequence spans 268 residues: Putative ABC transporter ATP-binding protein LMOf2365_1216 (268 aa).

The 236-residue stretch at 2-237 (LKTEHISFQY…KSNVEQAGLV (236 aa)) folds into the ABC transporter domain. Residue 35–42 (GANGSGKS) coordinates ATP.

This sequence belongs to the ABC transporter superfamily.

The protein resides in the cell membrane. Functionally, probably part of an ABC transporter complex. Responsible for energy coupling to the transport system. In Listeria monocytogenes serotype 4b (strain F2365), this protein is Putative ABC transporter ATP-binding protein LMOf2365_1216.